Consider the following 490-residue polypeptide: Betaine aldehyde dehydrogenase (490 aa).

K(+) is bound by residues Ile27 and Asp93. Gly150–Trp152 contacts NAD(+). Lys162 (charge relay system) is an active-site residue. Lys176 to Glu179 provides a ligand contact to NAD(+). Val180 is a binding site for K(+). An NAD(+)-binding site is contributed by Gly230–Thr233. A K(+)-binding site is contributed by Leu246. Catalysis depends on Glu252, which acts as the Proton acceptor. NAD(+) is bound by residues Gly254, Cys286, and Glu387. Cys286 serves as the catalytic Nucleophile. Cys286 carries the cysteine sulfenic acid (-SOH) modification. Residues Lys457 and Gly460 each coordinate K(+). Residue Glu464 is the Charge relay system of the active site.

This sequence belongs to the aldehyde dehydrogenase family. Dimer of dimers. Requires K(+) as cofactor.

It catalyses the reaction betaine aldehyde + NAD(+) + H2O = glycine betaine + NADH + 2 H(+). Its pathway is amine and polyamine biosynthesis; betaine biosynthesis via choline pathway; betaine from betaine aldehyde: step 1/1. Involved in the biosynthesis of the osmoprotectant glycine betaine. Catalyzes the irreversible oxidation of betaine aldehyde to the corresponding acid. This Pseudomonas putida (strain GB-1) protein is Betaine aldehyde dehydrogenase.